Here is a 1220-residue protein sequence, read N- to C-terminus: Pesticidal crystal protein Cry5Ac (1220 aa).

A disordered region spans residues 1194 to 1220 (PLPTDDQNSEGNTAFSTNSDTSMNNNQ). Positions 1198-1220 (DDQNSEGNTAFSTNSDTSMNNNQ) are enriched in polar residues.

Belongs to the delta endotoxin family.

In terms of biological role, promotes colloidosmotic lysis by binding to the midgut epithelial cells of hymenopteran species. The protein is Pesticidal crystal protein Cry5Ac (cry5Ac) of Bacillus thuringiensis.